The following is a 78-amino-acid chain: Major outer membrane lipoprotein Lpp (78 aa).

A signal peptide spans 1–20; the sequence is MKATKLVLGAVILGSTLLAG. Residue Cys-21 is the site of N-palmitoyl cysteine attachment. Cys-21 carries S-diacylglycerol cysteine lipidation. 2 consecutive repeats follow at residues 24-34 and 38-48; these read NAKIDQLSSDV and NAKVDQLSNDV. A coiled-coil region spans residues 27–75; sequence IDQLSSDVQTLNAKVDQLSNDVNAMRSDVQAAKDDAARANQRLDNMATK. Lys-78 carries the N6-murein peptidoglycan lysine modification.

It belongs to the Lpp family. As to quaternary structure, homotrimer.

The protein resides in the cell outer membrane. The protein localises to the secreted. Its subcellular location is the cell wall. Functionally, a highly abundant outer membrane lipoprotein that controls the distance between the inner and outer membranes. The only protein known to be covalently linked to the peptidoglycan network (PGN). Also non-covalently binds the PGN. The link between the cell outer membrane and PGN contributes to maintenance of the structural and functional integrity of the cell envelope, and maintains the correct distance between the PGN and the outer membrane. The chain is Major outer membrane lipoprotein Lpp from Shigella flexneri.